We begin with the raw amino-acid sequence, 266 residues long: Short-chain dehydrogenase/reductase tropE (266 aa).

The NADP(+) site is built by Leu-18, Asp-69, and Asn-96. The active-site Proton donor is the Ser-147. NADP(+) contacts are provided by Tyr-181, Lys-185, and Thr-216. Catalysis depends on Tyr-181, which acts as the Proton acceptor. Lys-185 functions as the Lowers pKa of active site Tyr in the catalytic mechanism.

This sequence belongs to the short-chain dehydrogenases/reductases (SDR) family.

The protein operates within secondary metabolite biosynthesis. In terms of biological role, short-chain dehydrogenase/reductase; part of the gene cluster that mediates the biosynthesis of the tropolone class of fungal maleic anhydrides. The pathway begins with the synthesis of 3-methylorcinaldehyde by the non-reducing polyketide synthase (PKS) tropA. 3-methylorcinaldehyde is the substrate for the FAD-dependent monooxygenase tropB to yield a dearomatized hydroxycyclohexadione. The 2-oxoglutarate-dependent dioxygenase tropC then performs the oxidative ring expansion to provide the first tropolone metabolite stipitaldehyde. Trop D converts stipitaldehyde into stipitacetal which is in turn converted to stipitalide by the short-chain dehydrogenase/reductase tropE. The next steps involve tropF, tropG, tropH, tropI and tropJ to form successive tropolone maleic anhydrides including stipitaldehydic, stipitatonic and stipitatic acids. This Talaromyces stipitatus (strain ATCC 10500 / CBS 375.48 / QM 6759 / NRRL 1006) (Penicillium stipitatum) protein is Short-chain dehydrogenase/reductase tropE.